The primary structure comprises 537 residues: 4-coumarate--CoA ligase (537 aa).

S189, S190, G191, T192, T193, and K197 together coordinate ATP. Residues Y239 and S243 each coordinate (E)-4-coumaroyl-AMP. K260 lines the CoA pocket. The tract at residues 262 to 331 (NLTTCLELIQ…ERFPKAIFGQ (70 aa)) is SBD1. (E)-4-coumaroyl-AMP-binding residues include A309, Q331, G332, T336, and M344. ATP contacts are provided by Q331, G332, and T336. The segment at 332-399 (GYGMTEAGPV…IRGPEIMKGY (68 aa)) is SBD2. ATP contacts are provided by D420 and R435. 2 residues coordinate (E)-4-coumaroyl-AMP: K437 and K441. CoA is bound by residues K443 and G444. K524 provides a ligand contact to ATP.

Belongs to the ATP-dependent AMP-binding enzyme family. Mg(2+) is required as a cofactor.

The enzyme catalyses (E)-4-coumarate + ATP + CoA = (E)-4-coumaroyl-CoA + AMP + diphosphate. It carries out the reaction (E)-4-coumarate + ATP + H(+) = (E)-4-coumaroyl-AMP + diphosphate. It catalyses the reaction (E)-4-coumaroyl-AMP + CoA = (E)-4-coumaroyl-CoA + AMP + H(+). It functions in the pathway phytoalexin biosynthesis; 3,4',5-trihydroxystilbene biosynthesis; 3,4',5-trihydroxystilbene from trans-4-coumarate: step 1/2. Carboxylate--CoA ligase that may use 4-coumarate as substrate. Follows a two-step reaction mechanism, wherein the carboxylate substrate first undergoes adenylation by ATP, followed by a thioesterification in the presence of CoA to yield the final CoA thioester. This Pinus taeda (Loblolly pine) protein is 4-coumarate--CoA ligase (4CL).